The primary structure comprises 490 residues: MRINPTTSDPGVSILENKNLGRIAQIIGPVLDVAFPPGKMPNIYNALVVKGRDTLGEEINVTCEVQQLLGNNRVRAVAMSATEGLKRGMDVVDMGTPLSVPVGGATLGRIFNVLGEPVDNLGPVDTRTTSPIHKSAPAFIQLDTKLSIFETGIKVVDLLAPYRRGGKIGLFGGAGVGKTVLIMELINNIAKAHGGVSVFGGVGERTREGNDLYMEMKESGVINEQNLAESKVALVYGQMNEPPGARMRVGLTALTMAEYFRDVNEQDVLLFIDNIFRFVQAGSEVSALLGRMPSAVGYQPTLSTEMGSLQERITSTKKGSITSIQAVYVPADDLTDPAPATTFAHLDATTVLSRGLAAKGIYPAVDPLDSTSTMLQPRIVGEEHYETAQQVKQTLQRYKELQDIIAILGLDELSEEDRLTVARARKIERFLSQPFFVAEVFTGSPGKYVGLAETIRGFKLILSGELDSLPEQAFYLVGNIDEATAKATNL.

Thr6 bears the Phosphothreonine mark. Residue Ser13 is modified to Phosphoserine. 172 to 179 (GGAGVGKT) provides a ligand contact to ATP.

Belongs to the ATPase alpha/beta chains family. As to quaternary structure, F-type ATPases have 2 components, CF(1) - the catalytic core - and CF(0) - the membrane proton channel. CF(1) has five subunits: alpha(3), beta(3), gamma(1), delta(1), epsilon(1). CF(0) has four main subunits: a(1), b(1), b'(1) and c(9-12).

It localises to the plastid. It is found in the chloroplast thylakoid membrane. It catalyses the reaction ATP + H2O + 4 H(+)(in) = ADP + phosphate + 5 H(+)(out). Its function is as follows. Produces ATP from ADP in the presence of a proton gradient across the membrane. The catalytic sites are hosted primarily by the beta subunits. The protein is ATP synthase subunit beta, chloroplastic of Aethionema grandiflorum (Persian stone-cress).